The chain runs to 432 residues: Adenylosuccinate synthetase (432 aa).

GTP contacts are provided by residues 12–18 (GDEGKGK) and 40–42 (GHT). Aspartate 13 acts as the Proton acceptor in catalysis. Aspartate 13 and glycine 40 together coordinate Mg(2+). Residues 13 to 16 (DEGK), 38 to 41 (NAGH), threonine 130, arginine 144, glutamine 225, threonine 240, and arginine 304 contribute to the IMP site. Catalysis depends on histidine 41, which acts as the Proton donor. 300 to 306 (STTGRPR) provides a ligand contact to substrate. GTP-binding positions include arginine 306, 332 to 334 (KLD), and 414 to 416 (SVG).

This sequence belongs to the adenylosuccinate synthetase family. In terms of assembly, homodimer. The cofactor is Mg(2+).

The protein localises to the cytoplasm. The enzyme catalyses IMP + L-aspartate + GTP = N(6)-(1,2-dicarboxyethyl)-AMP + GDP + phosphate + 2 H(+). The protein operates within purine metabolism; AMP biosynthesis via de novo pathway; AMP from IMP: step 1/2. In terms of biological role, plays an important role in the de novo pathway of purine nucleotide biosynthesis. Catalyzes the first committed step in the biosynthesis of AMP from IMP. The sequence is that of Adenylosuccinate synthetase from Geobacter sp. (strain M21).